A 355-amino-acid polypeptide reads, in one-letter code: Phosphoserine aminotransferase (355 aa).

R41 lines the L-glutamate pocket. Residues 75-76 (AS), W99, T147, D166, and Q189 each bind pyridoxal 5'-phosphate. K190 is modified (N6-(pyridoxal phosphate)lysine). 231-232 (NT) contacts pyridoxal 5'-phosphate.

The protein belongs to the class-V pyridoxal-phosphate-dependent aminotransferase family. SerC subfamily. In terms of assembly, homodimer. Pyridoxal 5'-phosphate serves as cofactor.

The protein localises to the cytoplasm. The enzyme catalyses O-phospho-L-serine + 2-oxoglutarate = 3-phosphooxypyruvate + L-glutamate. The catalysed reaction is 4-(phosphooxy)-L-threonine + 2-oxoglutarate = (R)-3-hydroxy-2-oxo-4-phosphooxybutanoate + L-glutamate. Its pathway is amino-acid biosynthesis; L-serine biosynthesis; L-serine from 3-phospho-D-glycerate: step 2/3. It functions in the pathway cofactor biosynthesis; pyridoxine 5'-phosphate biosynthesis; pyridoxine 5'-phosphate from D-erythrose 4-phosphate: step 3/5. Its function is as follows. Catalyzes the reversible conversion of 3-phosphohydroxypyruvate to phosphoserine and of 3-hydroxy-2-oxo-4-phosphonooxybutanoate to phosphohydroxythreonine. This Parabacteroides distasonis (strain ATCC 8503 / DSM 20701 / CIP 104284 / JCM 5825 / NCTC 11152) protein is Phosphoserine aminotransferase.